The primary structure comprises 371 residues: tRNA-specific 2-thiouridylase MnmA (371 aa).

Residues 13-20 (GMSGGVDS) and methionine 39 contribute to the ATP site. The segment at 99–101 (NPD) is interaction with target base in tRNA. The active-site Nucleophile is the cysteine 104. A disulfide bond links cysteine 104 and cysteine 200. Glycine 128 provides a ligand contact to ATP. An interaction with tRNA region spans residues 150–152 (KDQ). The active-site Cysteine persulfide intermediate is cysteine 200. An interaction with tRNA region spans residues 308–309 (RY).

This sequence belongs to the MnmA/TRMU family.

It localises to the cytoplasm. The catalysed reaction is S-sulfanyl-L-cysteinyl-[protein] + uridine(34) in tRNA + AH2 + ATP = 2-thiouridine(34) in tRNA + L-cysteinyl-[protein] + A + AMP + diphosphate + H(+). In terms of biological role, catalyzes the 2-thiolation of uridine at the wobble position (U34) of tRNA, leading to the formation of s(2)U34. In Geobacillus thermodenitrificans (strain NG80-2), this protein is tRNA-specific 2-thiouridylase MnmA.